A 611-amino-acid chain; its full sequence is Mitogen-activated protein kinase 10 (611 aa).

A Protein kinase domain is found at 25–316 (YKIQEVIGKG…AEEALAHPYF (292 aa)). ATP contacts are provided by residues 31–39 (IGKGSYGVV) and K54. The active-site Proton acceptor is D151. T187 bears the Phosphothreonine mark. The short motif at 187–189 (TDY) is the TXY element. Phosphotyrosine is present on Y189. The tract at residues 394–481 (ENGGNGPVIP…RVVGPVLPYE (88 aa)) is disordered. A compositionally biased stretch (basic and acidic residues) spans 426–439 (EQPRIGPSRDKPSD).

The protein belongs to the protein kinase superfamily. CMGC Ser/Thr protein kinase family. MAP kinase subfamily. Dually phosphorylated on Thr-187 and Tyr-189, which activates the enzyme.

It catalyses the reaction L-seryl-[protein] + ATP = O-phospho-L-seryl-[protein] + ADP + H(+). The catalysed reaction is L-threonyl-[protein] + ATP = O-phospho-L-threonyl-[protein] + ADP + H(+). Activated by threonine and tyrosine phosphorylation. This Oryza sativa subsp. japonica (Rice) protein is Mitogen-activated protein kinase 10 (MPK10).